The sequence spans 261 residues: Aquaporin-8 (261 aa).

At 1 to 36 (MSGEQTPMCSMDLPEVKVKTSMAGRCRVFWYEQYVQ) the chain is on the cytoplasmic side. Residues 37-57 (PCIVELVGSALFIFIGCLSVI) traverse the membrane as a helical segment. Cys53 carries the cysteine persulfide modification. The residue at position 53 (Cys53) is a Cysteine sulfenic acid (-SOH). At 58–84 (ENSPNTGLLQPALAHGLALGLIIATLG) the chain is on the extracellular side. The helical transmembrane segment at 85-105 (NISGGHFNPAVSLAVTVIGGL) threads the bilayer. The NPA 1 motif lies at 92-94 (NPA). Residues 106 to 107 (KT) are Cytoplasmic-facing. A helical transmembrane segment spans residues 108–128 (MLLIPYWISQLFGGLIGAALA). The Extracellular segment spans residues 129–156 (KVVSPEERFWNASGAAFAIVQEQEQVAE). Asn139 carries an N-linked (GlcNAc...) asparagine glycan. The chain crosses the membrane as a helical span at residues 157–177 (ALGIEIILTMLLVLAVCMGAV). Over 178-183 (NEKTMG) the chain is Cytoplasmic. Residues 184–204 (PLAPFSIGFSVIVDILAGGSI) form a helical membrane-spanning segment. The Extracellular segment spans residues 205 to 228 (SGACMNPARAFGPAVMAGYWDFHW). The NPA 2 signature appears at 210 to 212 (NPA). The helical transmembrane segment at 229–249 (IYWLGPLLAGLFVGLLIRLLI) threads the bilayer. The Cytoplasmic portion of the chain corresponds to 250 to 261 (GDEKTRLILKSR).

This sequence belongs to the MIP/aquaporin (TC 1.A.8) family. In terms of processing, sulfenylation at Cys-53(C53-SOH) when hydrogen peroxide flows through the AQP8 channel, making it susceptible to hydrogen sulfide produced by CBS. Post-translationally, persulfidation at Cys-53 is required to gate AQP8 channel; under stress condition, hydrogen peroxide accumulates in the cell leading to CBS activation that produces hydrogen sulfide inducing persulfidation of oxidized Cys-53 (C53-SOH). N-glycosylated. Expressed in placenta. Highly expressed in the epithelial layer of gall-bladders. Expressed in heart, kidney, submandibular gland, liver, small intestine, colon, testes, and epididymis. In testes, expressed in spermatogenic cells.

The protein resides in the cell membrane. It is found in the mitochondrion inner membrane. It localises to the apical cell membrane. The protein localises to the basolateral cell membrane. Its subcellular location is the smooth endoplasmic reticulum membrane. It carries out the reaction H2O(in) = H2O(out). The catalysed reaction is urea(in) = urea(out). The enzyme catalyses NH4(+)(in) = NH4(+)(out). It catalyses the reaction H2O2(out) = H2O2(in). It carries out the reaction formamide(out) = formamide(in). The catalysed reaction is methylamine(out) = methylamine(in). Its activity is regulated as follows. Reversibly gated by a two-step sulfenylation-persulfidation process in cells undergoing diverse stresses. Channel that allows the facilitated permeation of water and uncharged molecules, such as hydrogen peroxide and the neutral form of ammonia (NH3), through cellular membranes such as plasma membrane, inner mitochondrial membrane and endoplasmic reticulum membrane of several tissues. The transport of ammonia neutral form induces a parallel transport of proton, at alkaline pH when the concentration of ammonia is high. However, it is unclear whether the transport of proton takes place via the aquaporin or via an endogenous pathway. Also, may transport ammonia analogs such as formamide and methylamine, a transport favourited at basic pH due to the increase of unprotonated (neutral) form, which is expected to favor diffusion. In vitro, may be also permeable to urea but not to glycerol. Does not transport urea or glycerol. The water transport mechanism is mercury- and copper-sensitive and passive in response to osmotic driving forces. At the canicular plasma membrane, mediates the osmotic transport of water toward the bile canaliculus and facilitates the cAMP-induced bile canalicular water secretion, a process involved in bile formation. In addition, mediates the hydrogen peroxide release from hepatocyte mitochondria that modulates the SREBF2-mediated cholesterol synthesis and facilitates the mitochondrial ammonia uptake which is metabolized into urea, mainly under glucagon stimulation. In B cells, transports the CYBB-generated hydrogen peroxide from the external leaflet of the plasma membrane to the cytosol to promote B cell activation and differentiation for signal amplification. In the small intestine and colon system, mediates water transport through mitochondria and apical membrane of epithelial cells. May play an important role in the adaptive response of proximal tubule cells to acidosis possibly facilitating mitochondrial ammonia transport. The sequence is that of Aquaporin-8 from Mus musculus (Mouse).